The following is a 691-amino-acid chain: DNA topoisomerase 1 (691 aa).

Residues 3–114 (DYLVIVESPA…DCRVVFNEIT (112 aa)) form the Toprim domain. Mg(2+)-binding residues include glutamate 9 and aspartate 82. In terms of domain architecture, Topo IA-type catalytic spans 129–558 (NMDLVDAQQA…NFYTDFEKRV (430 aa)). The interval 163–168 (SAGRVQ) is interaction with DNA. Residue tyrosine 298 is the O-(5'-phospho-DNA)-tyrosine intermediate of the active site. 3 consecutive C4-type zinc fingers follow at residues 579–605 (CELC…FPDC), 619–647 (CPSC…YPDC), and 660–683 (CPKC…CVEC).

This sequence belongs to the type IA topoisomerase family. In terms of assembly, monomer. Interacts with the RNA polymerase core. The cofactor is Mg(2+).

It carries out the reaction ATP-independent breakage of single-stranded DNA, followed by passage and rejoining.. Functionally, releases the supercoiling and torsional tension of DNA, which is introduced during the DNA replication and transcription, by transiently cleaving and rejoining one strand of the DNA duplex. Introduces a single-strand break via transesterification at a target site in duplex DNA. The scissile phosphodiester is attacked by the catalytic tyrosine of the enzyme, resulting in the formation of a DNA-(5'-phosphotyrosyl)-enzyme intermediate and the expulsion of a 3'-OH DNA strand. The free DNA strand then undergoes passage around the unbroken strand, thus removing DNA supercoils. Finally, in the religation step, the DNA 3'-OH attacks the covalent intermediate to expel the active-site tyrosine and restore the DNA phosphodiester backbone. The polypeptide is DNA topoisomerase 1 (Bacillus subtilis (strain 168)).